A 1184-amino-acid chain; its full sequence is MVGTKAWVFSFLVLEVTSVLGRQTMLTQSVRRVQPGKKNPSIFAKPADTLESPGEWTTWFNIDYPGGKGDYERLDAIRFYYGDRVCARPLRLEARTTDWTPAGSTGQVVHGSPREGFWCLNREQRPGQNCSNYTVRFLCPPGSLRRDTERIWSPWSPWSKCSAACGQTGVQTRTRICLAEMVSLCSEASEEGQHCMGQDCTACDLTCPMGQVNADCDACMCQDFMLHGAVSLPGGAPASGAAIYLLTKTPKLLTQTDSDGRFRIPGLCPDGKSILKITKVKFAPIVLTMPKTSLKAATIKAEFVRAETPYMVMNPETKARRAGQSVSLCCKATGKPRPDKYFWYHNDTLLDPSLYKHESKLVLRKLQQHQAGEYFCKAQSDAGAVKSKVAQLIVIASDETPCNPVPESYLIRLPHDCFQNATNSFYYDVGRCPVKTCAGQQDNGIRCRDAVQNCCGISKTEEREIQCSGYTLPTKVAKECSCQRCTETRSIVRGRVSAADNGEPMRFGHVYMGNSRVSMTGYKGTFTLHVPQDTERLVLTFVDRLQKFVNTTKVLPFNKKGSAVFHEIKMLRRKKPITLEAMETNIIPLGEVVGEDPMAELEIPSRSFYRQNGEPYIGKVKASVTFLDPRNISTATAAQTDLNFINDEGDTFPLRTYGMFSVDFRDEVTSEPLNAGKVKVHLDSTQVKMPEHISTVKLWSLNPDTGLWEEEGDFKFENQRRNKREDRTFLVGNLEIRERRLFNLDVPESRRCFVKVRAYRSERFLPSEQIQGVVISVINLEPRTGFLSNPRAWGRFDSVITGPNGACVPAFCDDQSPDAYSAYVLASLAGEELQAVESSPKFNPNAIGVPQPYLNKLNYRRTDHEDPRVKKTAFQISMAKPRPNSAEESNGPIYAFENLRACEEAPPSAAHFRFYQIEGDRYDYNTVPFNEDDPMSWTEDYLAWWPKPMEFRACYIKVKIVGPLEVNVRSRNMGGTHRQTVGKLYGIRDVRSTRDRDQPNVSAACLEFKCSGMLYDQDRVDRTLVKVIPQGSCRRASVNPMLHEYLVNHLPLAVNNDTSEYTMLAPLDPLGHNYGIYTVTDQDPRTAKEIALGRCFDGTSDGSSRIMKSNVGVALTFNCVERQVGRQSAFQYLQSTPAQSPAAGTVQGRVPSRRQQRASRGGQRQGGVVASLRFPRVAQQPLIN.

The N-terminal stretch at 1–21 is a signal peptide; sequence MVGTKAWVFSFLVLEVTSVLG. 2 N-linked (GlcNAc...) asparagine glycosylation sites follow: Asn129 and Asn132. In terms of domain architecture, TSP type-1 spans 149 to 201; sequence ERIWSPWSPWSKCSAACGQTGVQTRTRICLAEMVSLCSEASEEGQHCMGQDCT. 4 disulfides stabilise this stretch: Cys161–Cys195, Cys165–Cys200, Cys177–Cys185, and Cys330–Cys376. The region spanning 309–395 is the Ig-like C2-type domain; it reads PYMVMNPETK…KSKVAQLIVI (87 aa). Asn346, Asn420, Asn550, Asn631, Asn1000, and Asn1056 each carry an N-linked (GlcNAc...) asparagine glycan. Residues 1136 to 1170 are disordered; sequence TPAQSPAAGTVQGRVPSRRQQRASRGGQRQGGVVA. The span at 1158–1170 shows a compositional bias: low complexity; it reads ASRGGQRQGGVVA.

In terms of assembly, monomer. Interacts with TGFB1. Post-translationally, cleaved into 2 chains possibly by a furin-like protease upon or preceding secretion. As to expression, specifically expressed in cartilage. Localizes in the intermediates layer of articular cartilage but neither in the superficial nor in the deepest regions. Specifically and highly expressed in intervertebral disk tissue. Expression increases with aging in hip articular cartilage. Overexpressed in articular hyaline cartilage from patients with calcium pyrophosphate dihydrate crystal deposition disease (CPPD). Expression in intervertebral disk tissue from individuals with lumbar disk disease increases as disk degeneration progresses.

Its subcellular location is the secreted. It is found in the extracellular space. The protein resides in the extracellular matrix. In terms of biological role, probably plays a role in cartilage scaffolding. May act by antagonizing TGF-beta1 (TGFB1) and IGF1 functions. Has the ability to suppress IGF1-induced proliferation and sulfated proteoglycan synthesis, and inhibits ligand-induced IGF1R autophosphorylation. May inhibit TGFB1-mediated induction of cartilage matrix genes via its interaction with TGFB1. Overexpression may lead to impair chondrocyte growth and matrix repair and indirectly promote inorganic pyrophosphate (PPi) supersaturation in aging and osteoarthritis cartilage. The chain is Cartilage intermediate layer protein 1 (CILP) from Homo sapiens (Human).